Consider the following 164-residue polypeptide: Ubiquitin-fold modifier-conjugating enzyme 1 (164 aa).

Cys116 (glycyl thioester intermediate) is an active-site residue.

It belongs to the ubiquitin-conjugating enzyme family. UFC1 subfamily.

E2-like enzyme which forms an intermediate with UFM1 via a thioester linkage. This chain is Ubiquitin-fold modifier-conjugating enzyme 1, found in Drosophila persimilis (Fruit fly).